The chain runs to 750 residues: GTP pyrophosphokinase rsh (750 aa).

An HD domain is found at 45 to 144 (YFSHPLEVAA…VKLADRLHNM (100 aa)). Positions 390 to 451 (DQVFCFTPKG…KNGDEVDIIR (62 aa)) constitute a TGS domain. The interval 587–613 (AAKVDPAATTPKPGKRALPIRGTNPDL) is disordered. Positions 676–750 (RISVSAINSP…SVSSAKRVNG (75 aa)) constitute an ACT domain.

Belongs to the RelA/SpoT family.

It carries out the reaction GTP + ATP = guanosine 3'-diphosphate 5'-triphosphate + AMP. In terms of biological role, functions as a (p)ppGpp synthase. In eubacteria ppGpp (guanosine 3'-diphosphate 5'-diphosphate) is a mediator of the stringent response that coordinates a variety of cellular activities in response to changes in nutritional abundance. Plays a role in adaptation of Brucella to its intracellular host environment. In Brucella abortus (strain 2308), this protein is GTP pyrophosphokinase rsh (rsh).